The primary structure comprises 651 residues: tRNA uridine 5-carboxymethylaminomethyl modification enzyme MnmG (651 aa).

Residue 11–16 (GAGHAG) coordinates FAD. 296-310 (GPRYCPSIEDKIVRF) provides a ligand contact to NAD(+).

It belongs to the MnmG family. In terms of assembly, homodimer. Heterotetramer of two MnmE and two MnmG subunits. It depends on FAD as a cofactor.

Its subcellular location is the cytoplasm. In terms of biological role, NAD-binding protein involved in the addition of a carboxymethylaminomethyl (cmnm) group at the wobble position (U34) of certain tRNAs, forming tRNA-cmnm(5)s(2)U34. This chain is tRNA uridine 5-carboxymethylaminomethyl modification enzyme MnmG, found in Chloroflexus aurantiacus (strain ATCC 29366 / DSM 635 / J-10-fl).